The chain runs to 396 residues: S-adenosylmethionine synthase 4 (396 aa).

Glu12 is a Mg(2+) binding site. His18 serves as a coordination point for ATP. Glu46 contributes to the K(+) binding site. The L-methionine site is built by Glu59 and Gln102. ATP is bound by residues 170-172 (DGK), 238-241 (SGRF), Asp249, 255-256 (RK), Ala272, Lys276, and Lys280. Asp249 lines the L-methionine pocket. Lys280 serves as a coordination point for L-methionine.

This sequence belongs to the AdoMet synthase family. Homotetramer. The cofactor is Mn(2+). Mg(2+) serves as cofactor. It depends on Co(2+) as a cofactor. Requires K(+) as cofactor.

It localises to the cytoplasm. It carries out the reaction L-methionine + ATP + H2O = S-adenosyl-L-methionine + phosphate + diphosphate. It functions in the pathway amino-acid biosynthesis; S-adenosyl-L-methionine biosynthesis; S-adenosyl-L-methionine from L-methionine: step 1/1. Functionally, catalyzes the formation of S-adenosylmethionine from methionine and ATP. The reaction comprises two steps that are both catalyzed by the same enzyme: formation of S-adenosylmethionine (AdoMet) and triphosphate, and subsequent hydrolysis of the triphosphate. This Hordeum vulgare (Barley) protein is S-adenosylmethionine synthase 4 (SAM4).